A 199-amino-acid polypeptide reads, in one-letter code: Peptidyl-tRNA hydrolase (199 aa).

Residue Tyr-15 coordinates tRNA. His-20 serves as the catalytic Proton acceptor. 3 residues coordinate tRNA: Tyr-66, Asn-68, and Asn-114.

It belongs to the PTH family. Monomer.

The protein localises to the cytoplasm. It catalyses the reaction an N-acyl-L-alpha-aminoacyl-tRNA + H2O = an N-acyl-L-amino acid + a tRNA + H(+). In terms of biological role, hydrolyzes ribosome-free peptidyl-tRNAs (with 1 or more amino acids incorporated), which drop off the ribosome during protein synthesis, or as a result of ribosome stalling. Functionally, catalyzes the release of premature peptidyl moieties from peptidyl-tRNA molecules trapped in stalled 50S ribosomal subunits, and thus maintains levels of free tRNAs and 50S ribosomes. The chain is Peptidyl-tRNA hydrolase from Burkholderia ambifaria (strain MC40-6).